A 129-amino-acid polypeptide reads, in one-letter code: Small ribosomal subunit protein uS11 (129 aa).

The protein belongs to the universal ribosomal protein uS11 family. In terms of assembly, part of the 30S ribosomal subunit. Interacts with proteins S7 and S18. Binds to IF-3.

In terms of biological role, located on the platform of the 30S subunit, it bridges several disparate RNA helices of the 16S rRNA. Forms part of the Shine-Dalgarno cleft in the 70S ribosome. This chain is Small ribosomal subunit protein uS11, found in Bacillus anthracis (strain A0248).